Consider the following 505-residue polypeptide: Mannosyl-oligosaccharide alpha-1,2-mannosidase 1B (505 aa).

Residues 1–16 (MRTLLALAALAGFAAA) form the signal peptide. N88 and N174 each carry an N-linked (GlcNAc...) asparagine glycan. Cysteines 325 and 354 form a disulfide. The N-linked (GlcNAc...) asparagine glycan is linked to N359. E368 (proton donor) is an active-site residue. A Ca(2+)-binding site is contributed by T494.

This sequence belongs to the glycosyl hydrolase 47 family. As to quaternary structure, monomer. Requires Ca(2+) as cofactor. The cofactor is Mg(2+).

The protein localises to the cytoplasmic vesicle lumen. It catalyses the reaction N(4)-(alpha-D-Man-(1-&gt;2)-alpha-D-Man-(1-&gt;2)-alpha-D-Man-(1-&gt;3)-[alpha-D-Man-(1-&gt;2)-alpha-D-Man-(1-&gt;3)-[alpha-D-Man-(1-&gt;2)-alpha-D-Man-(1-&gt;6)]-alpha-D-Man-(1-&gt;6)]-beta-D-Man-(1-&gt;4)-beta-D-GlcNAc-(1-&gt;4)-beta-D-GlcNAc)-L-asparaginyl-[protein] (N-glucan mannose isomer 9A1,2,3B1,2,3) + 4 H2O = N(4)-(alpha-D-Man-(1-&gt;3)-[alpha-D-Man-(1-&gt;3)-[alpha-D-Man-(1-&gt;6)]-alpha-D-Man-(1-&gt;6)]-beta-D-Man-(1-&gt;4)-beta-D-GlcNAc-(1-&gt;4)-beta-D-GlcNAc)-L-asparaginyl-[protein] (N-glucan mannose isomer 5A1,2) + 4 beta-D-mannose. The enzyme catalyses N(4)-(alpha-D-Man-(1-&gt;2)-alpha-D-Man-(1-&gt;2)-alpha-D-Man-(1-&gt;3)-[alpha-D-Man-(1-&gt;3)-[alpha-D-Man-(1-&gt;2)-alpha-D-Man-(1-&gt;6)]-alpha-D-Man-(1-&gt;6)]-beta-D-Man-(1-&gt;4)-beta-D-GlcNAc-(1-&gt;4)-beta-D-GlcNAc)-L-asparaginyl-[protein] (N-glucan mannose isomer 8A1,2,3B1,3) + 3 H2O = N(4)-(alpha-D-Man-(1-&gt;3)-[alpha-D-Man-(1-&gt;3)-[alpha-D-Man-(1-&gt;6)]-alpha-D-Man-(1-&gt;6)]-beta-D-Man-(1-&gt;4)-beta-D-GlcNAc-(1-&gt;4)-beta-D-GlcNAc)-L-asparaginyl-[protein] (N-glucan mannose isomer 5A1,2) + 3 beta-D-mannose. It functions in the pathway protein modification; protein glycosylation. In terms of biological role, involved in the maturation of Asn-linked oligosaccharides. Progressively trims alpha-1,2-linked mannose residues from Man(9)GlcNAc(2) to produce Man(5)GlcNAc(2). This is Mannosyl-oligosaccharide alpha-1,2-mannosidase 1B (mns1B) from Emericella nidulans (strain FGSC A4 / ATCC 38163 / CBS 112.46 / NRRL 194 / M139) (Aspergillus nidulans).